We begin with the raw amino-acid sequence, 30 residues long: rRNA N-glycosylase (30 aa).

This sequence belongs to the ribosome-inactivating protein family. Type 1 RIP subfamily. Expressed in seeds.

The enzyme catalyses Endohydrolysis of the N-glycosidic bond at one specific adenosine on the 28S rRNA.. In terms of biological role, exhibits N-glycosylase activity. Catalyzes the release of one adenine from a ribosome. Acts as a ribosome-inactivating protein and inhibits protein synthesis in a rabbit-reticulocyte lysate system and in various cell lines (in vitro). The sequence is that of rRNA N-glycosylase from Saponaria ocymoides (Rock soapwort).